Consider the following 369-residue polypeptide: GTPase Obg (369 aa).

Positions 1-159 (MKFVDEVTID…KNLKLELRVL (159 aa)) constitute an Obg domain. The 175-residue stretch at 160 to 334 (ADVGLLGMPN…LIHAIYSHVA (175 aa)) folds into the OBG-type G domain. Residues 166–173 (GMPNAGKS), 191–195 (FTTLH), 213–216 (DIPG), 284–287 (NKLD), and 315–317 (SAL) each bind GTP. S173 and T193 together coordinate Mg(2+). A disordered region spans residues 339 to 369 (QPEEVPDPRFTTNEDLSEAAPAPDRDDPRFR).

Belongs to the TRAFAC class OBG-HflX-like GTPase superfamily. OBG GTPase family. In terms of assembly, monomer. Mg(2+) serves as cofactor.

The protein localises to the cytoplasm. In terms of biological role, an essential GTPase which binds GTP, GDP and possibly (p)ppGpp with moderate affinity, with high nucleotide exchange rates and a fairly low GTP hydrolysis rate. Plays a role in control of the cell cycle, stress response, ribosome biogenesis and in those bacteria that undergo differentiation, in morphogenesis control. The polypeptide is GTPase Obg (Leptothrix cholodnii (strain ATCC 51168 / LMG 8142 / SP-6) (Leptothrix discophora (strain SP-6))).